Here is a 303-residue protein sequence, read N- to C-terminus: Ribosomal protein uL3 glutamine methyltransferase (303 aa).

This sequence belongs to the protein N5-glutamine methyltransferase family. PrmB subfamily.

The enzyme catalyses L-glutaminyl-[ribosomal protein uL3] + S-adenosyl-L-methionine = N(5)-methyl-L-glutaminyl-[ribosomal protein uL3] + S-adenosyl-L-homocysteine + H(+). Its function is as follows. Methylates large ribosomal subunit protein uL3 on a specific glutamine residue. The chain is Ribosomal protein uL3 glutamine methyltransferase from Neisseria meningitidis serogroup A / serotype 4A (strain DSM 15465 / Z2491).